We begin with the raw amino-acid sequence, 91 residues long: Mercuric transport protein periplasmic component (91 aa).

The first 19 residues, 1–19 (MKKLFASLALAAFVAPVFA), serve as a signal peptide directing secretion. The HMA domain maps to 22-88 (QTVTLSVPGM…ATEDAGYPSS (67 aa)). 2 residues coordinate Hg(2+): Cys-33 and Cys-36.

This sequence belongs to the MerP family. In terms of assembly, monomer.

Its subcellular location is the periplasm. Functionally, involved in mercury resistance. Acts as a mercury scavenger that specifically binds to a mercuric ion in the periplasm and probably passes it to the cytoplasmic mercuric reductase MerA via the mercuric transport protein MerT. The chain is Mercuric transport protein periplasmic component from Acinetobacter calcoaceticus.